A 679-amino-acid chain; its full sequence is Sodium-dependent phosphate transporter 1 (679 aa).

Helical transmembrane passes span 21 to 41 (YLWMLILGFIIAFVLAFSVGA), 62 to 82 (ACILASIFETVGSVLLGAKVS), 100 to 120 (GLLMAGSVSAMFGSAVWQLVA), 158 to 178 (IVMSWFVSPLLSGIMSGILFF), 203 to 223 (ACTVGINLFSIMYTGAPLLGF), and 230 to 250 (GTILISVGCAVFCALIVWFFV). A phosphoserine mark is found at Ser265 and Ser269. Transmembrane regions (helical) follow at residues 511–531 (VSLLFQFLQILTACFGSFAHG), 558–578 (VATPIWLLLYGGVGICVGLWV), 600–620 (FSIELASALTVVIASNIGLPI), and 650–670 (IFMAWFVTVPISGVISAAIMA). An a region spans residues 550–558 (DTGDVSSKV).

It belongs to the inorganic phosphate transporter (PiT) (TC 2.A.20) family. In terms of tissue distribution, ubiquitously expressed.

Its subcellular location is the cell membrane. It catalyses the reaction 2 Na(+)(out) + phosphate(out) = 2 Na(+)(in) + phosphate(in). Functionally, sodium-phosphate symporter which preferentially transports the monovalent form of phosphate with a stoichiometry of two sodium ions per phosphate ion. May play a role in extracellular matrix and cartilage calcification as well as in vascular calcification. Essential for cell proliferation but this function is independent of its phosphate transporter activity. Its function is as follows. (Microbial infection) May function as a retroviral receptor as it confers human cells susceptibility to infection to Gibbon Ape Leukemia Virus (GaLV), Simian sarcoma-associated virus (SSAV) and Feline leukemia virus subgroup B (FeLV-B) as well as 10A1 murine leukemia virus (10A1 MLV). In Homo sapiens (Human), this protein is Sodium-dependent phosphate transporter 1 (SLC20A1).